A 269-amino-acid chain; its full sequence is Hemin import ATP-binding protein HmuV (269 aa).

The ABC transporter domain occupies 5 to 242 (LDAEAASFAI…SLIRRVFDIA (238 aa)). 37–44 (GPNGAGKS) serves as a coordination point for ATP.

It belongs to the ABC transporter superfamily. Heme (hemin) importer (TC 3.A.1.14.5) family. The complex is composed of two ATP-binding proteins (HmuV), two transmembrane proteins (HmuU) and a solute-binding protein (HmuT).

It localises to the cell inner membrane. Part of the ABC transporter complex HmuTUV involved in hemin import. Responsible for energy coupling to the transport system. In Rhodopseudomonas palustris (strain BisB18), this protein is Hemin import ATP-binding protein HmuV.